A 67-amino-acid polypeptide reads, in one-letter code: Large ribosomal subunit protein uL29 (67 aa).

This sequence belongs to the universal ribosomal protein uL29 family.

The sequence is that of Large ribosomal subunit protein uL29 from Alkaliphilus oremlandii (strain OhILAs) (Clostridium oremlandii (strain OhILAs)).